The chain runs to 386 residues: Outer membrane protein assembly factor BamB (386 aa).

A signal peptide spans 1–25 (MMRNSRPGRAWRGAVVLTGLLALSG). Residue Cys-26 is the site of N-palmitoyl cysteine attachment. Cys-26 is lipidated: S-diacylglycerol cysteine.

This sequence belongs to the BamB family. Part of the Bam complex.

It is found in the cell outer membrane. In terms of biological role, part of the outer membrane protein assembly complex, which is involved in assembly and insertion of beta-barrel proteins into the outer membrane. This is Outer membrane protein assembly factor BamB from Bordetella pertussis (strain Tohama I / ATCC BAA-589 / NCTC 13251).